The following is a 65-amino-acid chain: Large ribosomal subunit protein bL35 (65 aa).

Disordered stretches follow at residues 1–23 (MPKL…GGFK) and 36–65 (MTTK…MPYA). Positions 54-65 (DTTSLVQQMPYA) are enriched in polar residues.

Belongs to the bacterial ribosomal protein bL35 family.

This Francisella tularensis subsp. tularensis (strain FSC 198) protein is Large ribosomal subunit protein bL35.